The sequence spans 357 residues: 5-hydroxytryptamine receptor 5A (357 aa).

The Extracellular segment spans residues 1–36 (MDLPINLTSFSLSTPSTLEPNRSLDTEALRTSQSFL). 2 N-linked (GlcNAc...) asparagine glycosylation sites follow: asparagine 6 and asparagine 21. Residues 37-63 (SAFRVLVLTLLGFLAAATFTWNLLVLA) traverse the membrane as a helical segment. Topologically, residues 64 to 76 (TILRVRTFHRVPH) are cytoplasmic. A helical membrane pass occupies residues 77-103 (NLVASMAISDVLVAVLVMPLSLVHELS). Residues 104-114 (GRRWQLGRRLC) lie on the Extracellular side of the membrane. A disulfide bridge connects residues cysteine 114 and cysteine 192. The chain crosses the membrane as a helical span at residues 115 to 137 (QLWIACDVLCCTASIWNVTAIAL). Residue aspartate 121 participates in serotonin binding. Topologically, residues 138-155 (DRYWSITRHLEYTLRARK) are cytoplasmic. The helical transmembrane segment at 156 to 176 (RVSNVMILLTWALSAVISLAP) threads the bilayer. The Extracellular segment spans residues 177 to 198 (LLFGWGETYSELSEECQVSREP). Residues 199-220 (SYTVFSTVGAFYLPLCVVLFVY) traverse the membrane as a helical segment. Residues 221 to 287 (WKIYKAAKFR…QKEQRAALMV (67 aa)) are Cytoplasmic-facing. Residues 288–312 (GILIGVFVLCWFPFFVTELISPLCS) traverse the membrane as a helical segment. The Extracellular segment spans residues 313 to 314 (WD). A helical transmembrane segment spans residues 315–339 (IPALWKSIFLWLGYSNSFFNPLIYT). At 340-357 (AFNRSYSSAFKVFFSKQQ) the chain is on the cytoplasmic side.

It belongs to the G-protein coupled receptor 1 family. As to expression, central nervous system.

Its subcellular location is the cell membrane. Functionally, G-protein coupled receptor for 5-hydroxytryptamine (serotonin), a biogenic hormone that functions as a neurotransmitter, a hormone and a mitogen. Also functions as a receptor for ergot alkaloid derivatives and other psychoactive substances. Ligand binding causes a conformation change that triggers signaling via guanine nucleotide-binding proteins (G proteins) and modulates the activity of downstream effectors. Htr5a is coupled to G(i)/G(o) G alpha proteins and mediates inhibitory neurotransmission: signaling inhibits adenylate cyclase activity and activates a phosphatidylinositol-calcium second messenger system that regulates the release of Ca(2+) ions from intracellular stores. The chain is 5-hydroxytryptamine receptor 5A from Rattus norvegicus (Rat).